Consider the following 121-residue polypeptide: Parathyroid hormone-related protein (121 aa).

An N-terminal signal peptide occupies residues 1-14 (VGVFLLSYSVPSCG). A propeptide spanning residues 15–24 (RSVEELGRRL) is cleaved from the precursor. The important for receptor binding stretch occupies residues 47–58 (RFFLHHLIAEIH). The interval 61-121 (EIRATSEVSP…PGKKKKGKPG (61 aa)) is disordered. Residues 66-80 (SEVSPNSKPAPNTKN) show a composition bias toward polar residues. The short motif at 98–119 (TNKVETYKEQPLKTPGKKKKGK) is the Nuclear localization signal element. Over residues 99–108 (NKVETYKEQP) the composition is skewed to basic and acidic residues. The segment covering 112–121 (PGKKKKGKPG) has biased composition (basic residues).

It belongs to the parathyroid hormone family. In terms of assembly, PTHrP interacts with PTH1R (via N-terminal extracellular domain).

The protein resides in the secreted. It is found in the cytoplasm. The protein localises to the nucleus. Its function is as follows. Neuroendocrine peptide which is a critical regulator of cellular and organ growth, development, migration, differentiation and survival and of epithelial calcium ion transport. Acts by binding to its receptor, PTH1R, activating G protein-coupled receptor signaling. Regulates endochondral bone development and epithelial-mesenchymal interactions during the formation of the mammary glands and teeth. Required for skeletal homeostasis. Promotes mammary mesenchyme differentiation and bud outgrowth by modulating mesenchymal cell responsiveness to BMPs. Up-regulates BMPR1A expression in the mammary mesenchyme and this increases the sensitivity of these cells to BMPs and allows them to respond to BMP4 in a paracrine and/or autocrine fashion. BMP4 signaling in the mesenchyme, in turn, triggers epithelial outgrowth and augments MSX2 expression, which causes the mammary mesenchyme to inhibit hair follicle formation within the nipple sheath. This Ovis aries (Sheep) protein is Parathyroid hormone-related protein (PTHLH).